Consider the following 126-residue polypeptide: Holo-[acyl-carrier-protein] synthase (126 aa).

Residues Asp-9 and Glu-58 each coordinate Mg(2+).

It belongs to the P-Pant transferase superfamily. AcpS family. The cofactor is Mg(2+).

The protein resides in the cytoplasm. The enzyme catalyses apo-[ACP] + CoA = holo-[ACP] + adenosine 3',5'-bisphosphate + H(+). In terms of biological role, transfers the 4'-phosphopantetheine moiety from coenzyme A to a Ser of acyl-carrier-protein. This Edwardsiella ictaluri (strain 93-146) protein is Holo-[acyl-carrier-protein] synthase.